The chain runs to 100 residues: MTKSELIARIAERNPHLYQRDVERIVSTIFDEIADALARGDRVELRGFGAFSVKRRDARMGRNPRTGETVDVDAKVAPYFKTGKQLRELLNGGESESDDD.

This sequence belongs to the bacterial histone-like protein family. Heterodimer of an alpha and a beta chain.

In terms of biological role, this protein is one of the two subunits of integration host factor, a specific DNA-binding protein that functions in genetic recombination as well as in transcriptional and translational control. The sequence is that of Integration host factor subunit beta from Rhodospirillum rubrum (strain ATCC 11170 / ATH 1.1.1 / DSM 467 / LMG 4362 / NCIMB 8255 / S1).